The chain runs to 368 residues: tRNA/tmRNA (uracil-C(5))-methyltransferase (368 aa).

5 residues coordinate S-adenosyl-L-methionine: Q190, Y218, N223, E239, and D301. The active-site Nucleophile is the C326. E360 acts as the Proton acceptor in catalysis.

This sequence belongs to the class I-like SAM-binding methyltransferase superfamily. RNA M5U methyltransferase family. TrmA subfamily.

It catalyses the reaction uridine(54) in tRNA + S-adenosyl-L-methionine = 5-methyluridine(54) in tRNA + S-adenosyl-L-homocysteine + H(+). It carries out the reaction uridine(341) in tmRNA + S-adenosyl-L-methionine = 5-methyluridine(341) in tmRNA + S-adenosyl-L-homocysteine + H(+). Dual-specificity methyltransferase that catalyzes the formation of 5-methyluridine at position 54 (m5U54) in all tRNAs, and that of position 341 (m5U341) in tmRNA (transfer-mRNA). This chain is tRNA/tmRNA (uracil-C(5))-methyltransferase, found in Aliivibrio fischeri (strain MJ11) (Vibrio fischeri).